A 442-amino-acid chain; its full sequence is Glutamyl-tRNA(Gln) amidotransferase subunit D (442 aa).

The interval 63 to 84 is disordered; the sequence is TQTDIGSSAGAGADTEADKTES. Residues 102 to 429 form the Asparaginase/glutaminase domain; it reads PTVSLISTGG…PDPTNAMRKS (328 aa). Catalysis depends on residues threonine 112, threonine 188, aspartate 189, and lysine 265.

Belongs to the asparaginase 1 family. GatD subfamily. In terms of assembly, heterodimer of GatD and GatE.

It catalyses the reaction L-glutamyl-tRNA(Gln) + L-glutamine + ATP + H2O = L-glutaminyl-tRNA(Gln) + L-glutamate + ADP + phosphate + H(+). In terms of biological role, allows the formation of correctly charged Gln-tRNA(Gln) through the transamidation of misacylated Glu-tRNA(Gln) in organisms which lack glutaminyl-tRNA synthetase. The reaction takes place in the presence of glutamine and ATP through an activated gamma-phospho-Glu-tRNA(Gln). The GatDE system is specific for glutamate and does not act on aspartate. In Haloquadratum walsbyi (strain DSM 16790 / HBSQ001), this protein is Glutamyl-tRNA(Gln) amidotransferase subunit D.